The sequence spans 201 residues: Recombination protein RecR (201 aa).

The C4-type zinc finger occupies 59–74; the sequence is CEICGNMDTENMCRIC. Residues 82 to 177 form the Toprim domain; that stretch reads SIIAIVETVA…KISRLASGIP (96 aa).

The protein belongs to the RecR family.

Functionally, may play a role in DNA repair. It seems to be involved in an RecBC-independent recombinational process of DNA repair. It may act with RecF and RecO. The sequence is that of Recombination protein RecR from Rickettsia africae (strain ESF-5).